Consider the following 177-residue polypeptide: MASSMMASTAAVARAGPAQSNMVAPFNGLRSSVAFPATRKANKNLSTLPSNGGKVSCMQVWPPEGLKKFETLSYLPPLSVEDLAKEVDYLLRNDWVPCIEFSKEGFVYRENHASPGYYDGRYWTMWKLPMFGCTDASQVIAEVEEAKKAYPEYFVRIIGFDNKRQVQCISFIAYKPT.

A chloroplast-targeting transit peptide spans 1–56 (MASSMMASTAAVARAGPAQSNMVAPFNGLRSSVAFPATRKANKNLSTLPSNGGKVS).

The protein belongs to the RuBisCO small chain family. As to quaternary structure, heterohexadecamer of 8 large and 8 small subunits.

The protein resides in the plastid. The protein localises to the chloroplast. Functionally, ruBisCO catalyzes two reactions: the carboxylation of D-ribulose 1,5-bisphosphate, the primary event in carbon dioxide fixation, as well as the oxidative fragmentation of the pentose substrate. Both reactions occur simultaneously and in competition at the same active site. Although the small subunit is not catalytic it is essential for maximal activity. The chain is Ribulose bisphosphate carboxylase small subunit, chloroplastic 2 from Lemna gibba (Swollen duckweed).